Reading from the N-terminus, the 54-residue chain is ATP synthase F(0) complex subunit 8 (54 aa).

The helical transmembrane segment at 4–24 (LNPGPWFAILVFSWLIFLTII) threads the bilayer. Positions 35–54 (NEPTPVSAEKHKTESWDWPW) are disordered. Over residues 42–54 (AEKHKTESWDWPW) the composition is skewed to basic and acidic residues.

The protein belongs to the ATPase protein 8 family. Component of the ATP synthase complex composed at least of ATP5F1A/subunit alpha, ATP5F1B/subunit beta, ATP5MC1/subunit c (homooctomer), MT-ATP6/subunit a, MT-ATP8/subunit 8, ATP5ME/subunit e, ATP5MF/subunit f, ATP5MG/subunit g, ATP5MK/subunit k, ATP5MJ/subunit j, ATP5F1C/subunit gamma, ATP5F1D/subunit delta, ATP5F1E/subunit epsilon, ATP5PF/subunit F6, ATP5PB/subunit b, ATP5PD/subunit d, ATP5PO/subunit OSCP. ATP synthase complex consists of a soluble F(1) head domain (subunits alpha(3) and beta(3)) - the catalytic core - and a membrane F(0) domain - the membrane proton channel (subunits c, a, 8, e, f, g, k and j). These two domains are linked by a central stalk (subunits gamma, delta, and epsilon) rotating inside the F1 region and a stationary peripheral stalk (subunits F6, b, d, and OSCP).

It localises to the mitochondrion membrane. Its function is as follows. Subunit 8, of the mitochondrial membrane ATP synthase complex (F(1)F(0) ATP synthase or Complex V) that produces ATP from ADP in the presence of a proton gradient across the membrane which is generated by electron transport complexes of the respiratory chain. ATP synthase complex consist of a soluble F(1) head domain - the catalytic core - and a membrane F(1) domain - the membrane proton channel. These two domains are linked by a central stalk rotating inside the F(1) region and a stationary peripheral stalk. During catalysis, ATP synthesis in the catalytic domain of F(1) is coupled via a rotary mechanism of the central stalk subunits to proton translocation. In vivo, can only synthesize ATP although its ATP hydrolase activity can be activated artificially in vitro. Part of the complex F(0) domain. This is ATP synthase F(0) complex subunit 8 from Cyprinus carpio (Common carp).